Consider the following 192-residue polypeptide: Late embryogenesis abundant protein 47 (192 aa).

The Nuclear localization signal (NLS) motif lies at 5 to 9; it reads QLQKP. SMP domains are found at residues 68–125 and 133–190; these read ITIG…LNAR and TTLA…RINQ. The tract at residues 146–174 is disordered; sequence LPSDKAATRKDAEGVTGAEMRNDPHLTTY. Positions 147-158 are enriched in basic and acidic residues; it reads PSDKAATRKDAE.

Belongs to the LEA type SMP family.

Its subcellular location is the cytoplasm. It is found in the nucleus. Functionally, LEA proteins are late embryonic proteins abundant in higher plant seed embryos. The function of those proteins is not known. This Arabidopsis thaliana (Mouse-ear cress) protein is Late embryogenesis abundant protein 47.